We begin with the raw amino-acid sequence, 476 residues long: mRNA cap guanine-N(7) methyltransferase (476 aa).

A compositionally biased stretch (basic and acidic residues) spans 1-14 (MANSTKAEEYEKMS). The interval 1-128 (MANSTKAEEY…TGDGTQNKRK (128 aa)) is disordered. Over residues 20–50 (ASVNSEAESSFSINENTTASGTGLSGKTSVC) the composition is skewed to polar residues. Phosphoserine occurs at positions 24, 28, and 29. 3 stretches are compositionally biased toward basic and acidic residues: residues 54-68 (DTARKRKEFEDDLVK), 84-93 (LDPEIVPEEK), and 107-117 (RETEDVPKDEY). A Phosphoserine modification is found at S118. The Nuclear localization signal signature appears at 126 to 128 (KRK). An mRNA cap 0 methyltransferase domain is found at 167–475 (SRIFYLRNFN…IYLVFAFEKQ (309 aa)). 176–177 (NN) provides a ligand contact to mRNA. S-adenosyl-L-methionine contacts are provided by K180, G205, D227, D261, Q284, and Y289.

The protein belongs to the class I-like SAM-binding methyltransferase superfamily. mRNA cap 0 methyltransferase family. As to quaternary structure, interacts with importin alpha, leading to stimulate both RNA-binding and methyltransferase activity. Interaction with importin alpha and beta is required for its nuclear localization, importin beta dissociating in response to RanGTP, allowing RNMT-importin alpha to bind RNA substrates. Interacts with elongating form of polymerase II and RNGTT. Interacts with RAMAC, this interaction significantly enhances RNA-binding and cap methyltransferase activity.

It is found in the nucleus. It catalyses the reaction a 5'-end (5'-triphosphoguanosine)-ribonucleoside in mRNA + S-adenosyl-L-methionine = a 5'-end (N(7)-methyl 5'-triphosphoguanosine)-ribonucleoside in mRNA + S-adenosyl-L-homocysteine. Methyltransferase activity is activated by RAMAC. In terms of biological role, catalytic subunit of the mRNA-capping methyltransferase RNMT:RAMAC complex that methylates the N7 position of the added guanosine to the 5'-cap structure of mRNAs. Binds RNA containing 5'-terminal GpppC. The sequence is that of mRNA cap guanine-N(7) methyltransferase (RNMT) from Macaca fascicularis (Crab-eating macaque).